Consider the following 210-residue polypeptide: CLAVATA3/ESR (CLE)-related protein 4D (210 aa).

The signal sequence occupies residues 1–21 (MAKNAMLCLLILSVVLALAFA). Residues 21 to 83 (ATNKKDDEEP…SNQLPNNNWM (63 aa)) form a required for secretion from the host cytoplasm to the host apoplasm region. Asparagine 32 and asparagine 59 each carry an N-linked (GlcNAc...) asparagine glycan. The disordered stretch occupies residues 115-210 (RRKTGTHSQR…APAGPDPIHH (96 aa)). Basic and acidic residues-rich tracts occupy residues 125 to 137 (HHEE…EKRG), 144 to 158 (PIHH…EKRG), 165 to 179 (PIHH…EKRV), and 186 to 200 (PIHH…EKRG). The A-1 repeat unit spans residues 127–135 (EETTLEQEK). The tract at residues 129–198 (TTLEQEKRGA…HQDTKFEQEK (70 aa)) is 4 X approximate repeat A. A CLE-1 repeat occupies 136 to 147 (RGAPAGPDPIHH). Residues 136–210 (RGAPAGPDPI…APAGPDPIHH (75 aa)) form a 4 X approximate repeat CLE region. One copy of the A-2 repeat lies at 148-156 (QDTTFEQEK). One copy of the CLE-2 repeat lies at 157–168 (RGAPAGPDPIHH). The A-3 repeat unit spans residues 169-177 (QDTTLEQEK). The stretch at 178 to 189 (RVAGAGPDPIHH) is one CLE-3 repeat. One copy of the A-4 repeat lies at 190 to 198 (QDTKFEQEK). The stretch at 199–210 (RGAPAGPDPIHH) is one CLE-4 repeat.

This sequence belongs to the CLV3/ESR signal peptide family. In terms of tissue distribution, highly expressed exclusively within the dorsal esophageal gland cell during syncytium formation in host plants.

The protein resides in the secreted. Its subcellular location is the host cytoplasm. It localises to the host extracellular space. The protein localises to the extracellular space. It is found in the apoplast. Its function is as follows. Mimics host plant CLE extracellular signal peptides that regulate cell fate. May play a role in the differentiation or division of feeding cells (syncytia) induced in plant roots during infection. This chain is CLAVATA3/ESR (CLE)-related protein 4D (CLE-4D), found in Globodera rostochiensis (Golden nematode worm).